A 530-amino-acid chain; its full sequence is Arginine--tRNA ligase (530 aa).

A 'HIGH' region motif is present at residues 113–123; that stretch reads ANPTGPLHIGH.

It belongs to the class-I aminoacyl-tRNA synthetase family. In terms of assembly, monomer.

The protein resides in the cytoplasm. It catalyses the reaction tRNA(Arg) + L-arginine + ATP = L-arginyl-tRNA(Arg) + AMP + diphosphate. This chain is Arginine--tRNA ligase, found in Campylobacter jejuni (strain RM1221).